Consider the following 194-residue polypeptide: Imidazoleglycerol-phosphate dehydratase (194 aa).

It belongs to the imidazoleglycerol-phosphate dehydratase family.

It is found in the cytoplasm. The catalysed reaction is D-erythro-1-(imidazol-4-yl)glycerol 3-phosphate = 3-(imidazol-4-yl)-2-oxopropyl phosphate + H2O. It functions in the pathway amino-acid biosynthesis; L-histidine biosynthesis; L-histidine from 5-phospho-alpha-D-ribose 1-diphosphate: step 6/9. The chain is Imidazoleglycerol-phosphate dehydratase from Clostridium kluyveri (strain NBRC 12016).